We begin with the raw amino-acid sequence, 115 residues long: Nitrogenase-stabilizing/protective protein NifW (115 aa).

Belongs to the NifW family. As to quaternary structure, homotrimer; associates with NifD.

May protect the nitrogenase Fe-Mo protein from oxidative damage. This is Nitrogenase-stabilizing/protective protein NifW from Rhodopseudomonas palustris (strain BisB18).